A 125-amino-acid chain; its full sequence is Large ribosomal subunit protein bL12 (125 aa).

The protein belongs to the bacterial ribosomal protein bL12 family. In terms of assembly, homodimer. Part of the ribosomal stalk of the 50S ribosomal subunit. Forms a multimeric L10(L12)X complex, where L10 forms an elongated spine to which 2 to 4 L12 dimers bind in a sequential fashion. Binds GTP-bound translation factors.

Functionally, forms part of the ribosomal stalk which helps the ribosome interact with GTP-bound translation factors. Is thus essential for accurate translation. The sequence is that of Large ribosomal subunit protein bL12 from Bradyrhizobium sp. (strain ORS 278).